The following is a 791-amino-acid chain: Pleckstrin homology domain-containing family H member 3 (791 aa).

An N-terminal signal peptide occupies residues 1–18 (MPLPGGLWWLLCCRRGFT). Residues 29 to 41 (LSGDGDEDEDDET) show a composition bias toward acidic residues. Positions 29 to 71 (LSGDGDEDEDDETFELRSPSPAGGGRGSLDVTLTQPTRNGPIT) are disordered. Residue Ser-30 is modified to Phosphoserine. Residues 59–71 (VTLTQPTRNGPIT) show a composition bias toward polar residues. Residues 95 to 199 (DVIVKGWLYR…WGVALREVIA (105 aa)) enclose the PH domain. Residues 237 to 399 (HTSSALYAPL…PSLAEISALS (163 aa)) enclose the MyTH4 domain. One can recognise an FERM domain in the interval 404 to 755 (LLCTVHCPGA…ANPSPERPCS (352 aa)). Low complexity predominate over residues 549 to 559 (PRGPLPLLDRL). Disordered stretches follow at residues 549–580 (PRGPLPLLDRLMPPPAPPREQPSRPARRPPPS) and 593–623 (LAKRRAERARRIGTGRSTESTAQVGGGGGGS). The segment covering 594-605 (AKRRAERARRIG) has biased composition (basic residues). Residue Arg-636 is modified to Omega-N-methylarginine. The disordered stretch occupies residues 748–791 (PSPERPCSSSGPPSQDLSDTSPPSQHQVLEKPQGQSGCLRQLQD). Polar residues predominate over residues 754-791 (CSSSGPPSQDLSDTSPPSQHQVLEKPQGQSGCLRQLQD).

The polypeptide is Pleckstrin homology domain-containing family H member 3 (Plekhh3) (Rattus norvegicus (Rat)).